A 349-amino-acid chain; its full sequence is Dehydrogenase FPY6 (349 aa).

This sequence belongs to the Gfo/Idh/MocA family.

Its pathway is secondary metabolite biosynthesis. Its function is as follows. Dehydrogenase; part of the gene cluster that mediates the biosynthesis of the gamma-pyrones fusapyrone (FPY) and deoxyfusapyrone (dFPY). FPY is an undecaketide and thus likely synthesized by the polyketide synthase FPY1 from acetyl-CoA functioning as starter unit and the addition of 10 malonyl-CoA extender units by successive Claisen-condensations. Next to this, FPY shares some rare features: C-glycosylated 4-deoxyglucose at C-3, a gem-dimethyl group at C-13, and an alpha-beta to beta-gamma double bond shift at C-20. During FPY biosynthesis mono-C-methyl groups are transferred to the tetra-, penta-, hexa- and heptaketide, while two C-methyl groups are transferred to the nonaketide, suggesting that the CMet domain is programmed to selectively catalyze two successive C-alpha-methylation reactions of the nonaketide, while other alpha-carbons are non- or mono-methylated only. While the origin of the 4'-deoxyglucose moiety remains opaque, its transfer to C-3 is most likely mediated by the C-glycosyltransferase FPY2. Next to this, the hydroxyl group present at C-33 and discriminating between FPY and dFPY, is likely to be installed by the cytochrome P450 monooxygenase FPY7. No putative function can be predicted for the remaining genes FPY3-FPY6. The protein is Dehydrogenase FPY6 of Fusarium mangiferae (Mango malformation disease fungus).